Reading from the N-terminus, the 321-residue chain is Phospho-N-acetylmuramoyl-pentapeptide-transferase (321 aa).

The next 10 helical transmembrane spans lie at 4 to 24, 51 to 71, 75 to 95, 109 to 129, 139 to 159, 173 to 193, 195 to 215, 222 to 242, 247 to 267, and 297 to 317; these read MVWA…WLIP, TMGG…TVGF, SGVL…DDYI, QKFT…VYGI, GFEV…LLIV, GLAA…ASAG, SDVT…FLFF, MFMG…LALL, LILP…ILQV, and VVYT…LLAM.

The protein belongs to the glycosyltransferase 4 family. MraY subfamily. Mg(2+) is required as a cofactor.

Its subcellular location is the cell membrane. The enzyme catalyses UDP-N-acetyl-alpha-D-muramoyl-L-alanyl-gamma-D-glutamyl-meso-2,6-diaminopimeloyl-D-alanyl-D-alanine + di-trans,octa-cis-undecaprenyl phosphate = di-trans,octa-cis-undecaprenyl diphospho-N-acetyl-alpha-D-muramoyl-L-alanyl-D-glutamyl-meso-2,6-diaminopimeloyl-D-alanyl-D-alanine + UMP. It functions in the pathway cell wall biogenesis; peptidoglycan biosynthesis. Its function is as follows. Catalyzes the initial step of the lipid cycle reactions in the biosynthesis of the cell wall peptidoglycan: transfers peptidoglycan precursor phospho-MurNAc-pentapeptide from UDP-MurNAc-pentapeptide onto the lipid carrier undecaprenyl phosphate, yielding undecaprenyl-pyrophosphoryl-MurNAc-pentapeptide, known as lipid I. The polypeptide is Phospho-N-acetylmuramoyl-pentapeptide-transferase (Heliobacterium modesticaldum (strain ATCC 51547 / Ice1)).